The sequence spans 311 residues: Protoheme IX farnesyltransferase (311 aa).

Helical transmembrane passes span 33 to 53 (VVML…PSPA), 55 to 75 (LWLL…AAAV), 104 to 124 (NALL…SSFI), 127 to 147 (LTAW…TLFL), 155 to 175 (IVIG…AVTG), 181 to 201 (GLLL…ALAL), 228 to 248 (IVLY…TRMM), 252 to 272 (YLVG…KLLV), and 287 to 307 (IIYL…FPIP).

It belongs to the UbiA prenyltransferase family. Protoheme IX farnesyltransferase subfamily.

Its subcellular location is the cell inner membrane. It catalyses the reaction heme b + (2E,6E)-farnesyl diphosphate + H2O = Fe(II)-heme o + diphosphate. The protein operates within porphyrin-containing compound metabolism; heme O biosynthesis; heme O from protoheme: step 1/1. Converts heme B (protoheme IX) to heme O by substitution of the vinyl group on carbon 2 of heme B porphyrin ring with a hydroxyethyl farnesyl side group. This Teredinibacter turnerae (strain ATCC 39867 / T7901) protein is Protoheme IX farnesyltransferase.